The primary structure comprises 115 residues: MPMFVVNTNVPRASVPDGLLSELTQQLAQATGKPAQYIAVHVVPDQLMTFGGSSEPCALCSLHSIGKIGGAQNRSYSKLLCGLLTERLRISPDRIYINFCDMNAANVGWNGSTFA.

Pro-2 acts as the Proton acceptor; via imino nitrogen in catalysis. Residues Lys-33 and Ile-65 each coordinate substrate. Position 78 is an N6-acetyllysine; alternate (Lys-78). Lys-78 carries the post-translational modification N6-succinyllysine; alternate. Asn-98 is a substrate binding site.

It belongs to the MIF family. In terms of assembly, homotrimer. Interacts with CXCR2 extracellular domain. Interacts with the CD74 extracellular domain, USO1, COPS5 and BNIPL.

It localises to the secreted. Its subcellular location is the cytoplasm. It catalyses the reaction 3-phenylpyruvate = enol-phenylpyruvate. The enzyme catalyses L-dopachrome = 5,6-dihydroxyindole-2-carboxylate. Functionally, pro-inflammatory cytokine involved in the innate immune response to bacterial pathogens. The expression of MIF at sites of inflammation suggests a role as mediator in regulating the function of macrophages in host defense. Counteracts the anti-inflammatory activity of glucocorticoids. Has phenylpyruvate tautomerase and dopachrome tautomerase activity (in vitro), but the physiological substrate is not known. It is not clear whether the tautomerase activity has any physiological relevance, and whether it is important for cytokine activity. The polypeptide is Macrophage migration inhibitory factor (MIF) (Bos taurus (Bovine)).